The chain runs to 348 residues: NADH-ubiquinone oxidoreductase chain 2 (348 aa).

10 helical membrane passes run Ser2–Phe22, Trp26–Tyr46, Ala55–Ile75, Val96–Pro116, Leu149–Gly169, Ile178–Pro198, Ser199–Leu219, Thr242–Pro262, Ile276–Ile296, and Ile323–Leu343.

The protein belongs to the complex I subunit 2 family. Core subunit of respiratory chain NADH dehydrogenase (Complex I) which is composed of 45 different subunits. Interacts with TMEM242.

It localises to the mitochondrion inner membrane. It carries out the reaction a ubiquinone + NADH + 5 H(+)(in) = a ubiquinol + NAD(+) + 4 H(+)(out). Core subunit of the mitochondrial membrane respiratory chain NADH dehydrogenase (Complex I) that is believed to belong to the minimal assembly required for catalysis. Complex I functions in the transfer of electrons from NADH to the respiratory chain. The immediate electron acceptor for the enzyme is believed to be ubiquinone. This is NADH-ubiquinone oxidoreductase chain 2 from Osphranter robustus (Wallaroo).